The sequence spans 607 residues: Elongation factor 4 (607 aa).

One can recognise a tr-type G domain in the interval 11-193; the sequence is EKIRNFSIIA…QIVEKVPAPT (183 aa). GTP is bound by residues 23–28 and 140–143; these read DHGKST and NKID.

It belongs to the TRAFAC class translation factor GTPase superfamily. Classic translation factor GTPase family. LepA subfamily.

It localises to the cell membrane. The catalysed reaction is GTP + H2O = GDP + phosphate + H(+). In terms of biological role, required for accurate and efficient protein synthesis under certain stress conditions. May act as a fidelity factor of the translation reaction, by catalyzing a one-codon backward translocation of tRNAs on improperly translocated ribosomes. Back-translocation proceeds from a post-translocation (POST) complex to a pre-translocation (PRE) complex, thus giving elongation factor G a second chance to translocate the tRNAs correctly. Binds to ribosomes in a GTP-dependent manner. This chain is Elongation factor 4, found in Streptococcus pneumoniae (strain Hungary19A-6).